Here is a 575-residue protein sequence, read N- to C-terminus: Potassium-transporting ATPase potassium-binding subunit (575 aa).

12 helical membrane-spanning segments follow: residues 4-24, 61-81, 133-153, 180-200, 258-278, 289-309, 344-364, 372-392, 394-414, 431-451, 499-519, and 545-565; these read SAWG…WPVG, LRYA…VYAL, GLAV…FALI, LWVL…QGVI, LANL…CFAF, WAVL…VIPA, IDAS…AVIA, LGGM…GGVG, GLYG…LMIG, LISI…AVAV, LLGL…LAIA, and LLIG…LALG.

It belongs to the KdpA family. As to quaternary structure, the system is composed of three essential subunits: KdpA, KdpB and KdpC.

Its subcellular location is the cell inner membrane. Its function is as follows. Part of the high-affinity ATP-driven potassium transport (or Kdp) system, which catalyzes the hydrolysis of ATP coupled with the electrogenic transport of potassium into the cytoplasm. This subunit binds the periplasmic potassium ions and delivers the ions to the membrane domain of KdpB through an intramembrane tunnel. This Variovorax paradoxus (strain S110) protein is Potassium-transporting ATPase potassium-binding subunit.